Consider the following 234-residue polypeptide: Sugar fermentation stimulation protein homolog (234 aa).

Belongs to the SfsA family.

The polypeptide is Sugar fermentation stimulation protein homolog (Shewanella halifaxensis (strain HAW-EB4)).